Consider the following 526-residue polypeptide: Bifunctional purine biosynthesis protein PurH (526 aa).

The region spanning 1-149 (MLHSLPIRRA…KNHEAVTVVV (149 aa)) is the MGS-like domain.

It belongs to the PurH family.

It carries out the reaction (6R)-10-formyltetrahydrofolate + 5-amino-1-(5-phospho-beta-D-ribosyl)imidazole-4-carboxamide = 5-formamido-1-(5-phospho-D-ribosyl)imidazole-4-carboxamide + (6S)-5,6,7,8-tetrahydrofolate. The enzyme catalyses IMP + H2O = 5-formamido-1-(5-phospho-D-ribosyl)imidazole-4-carboxamide. It participates in purine metabolism; IMP biosynthesis via de novo pathway; 5-formamido-1-(5-phospho-D-ribosyl)imidazole-4-carboxamide from 5-amino-1-(5-phospho-D-ribosyl)imidazole-4-carboxamide (10-formyl THF route): step 1/1. The protein operates within purine metabolism; IMP biosynthesis via de novo pathway; IMP from 5-formamido-1-(5-phospho-D-ribosyl)imidazole-4-carboxamide: step 1/1. The chain is Bifunctional purine biosynthesis protein PurH from Rhodospirillum rubrum (strain ATCC 11170 / ATH 1.1.1 / DSM 467 / LMG 4362 / NCIMB 8255 / S1).